Reading from the N-terminus, the 159-residue chain is MSQLTHINSTGEAHMVDVSAKAETSREARAEAFVGMKPETLAMIIEGRHHKGDVFATARIAGIQAAKRTWELIPLCHPLLLTKVEVQLEAQTKYNRVRIESCCRLTGKTGVEMEALTAASVAALTIYDMCKAVQKDMVIGPVRLLEKIGGKLGHFKVEQ.

Residues Leu-75–His-77 and Met-113–Glu-114 each bind substrate. Asp-128 is a catalytic residue.

This sequence belongs to the MoaC family. In terms of assembly, homohexamer; trimer of dimers.

It carries out the reaction (8S)-3',8-cyclo-7,8-dihydroguanosine 5'-triphosphate = cyclic pyranopterin phosphate + diphosphate. The protein operates within cofactor biosynthesis; molybdopterin biosynthesis. Catalyzes the conversion of (8S)-3',8-cyclo-7,8-dihydroguanosine 5'-triphosphate to cyclic pyranopterin monophosphate (cPMP). This chain is Cyclic pyranopterin monophosphate synthase, found in Photorhabdus laumondii subsp. laumondii (strain DSM 15139 / CIP 105565 / TT01) (Photorhabdus luminescens subsp. laumondii).